We begin with the raw amino-acid sequence, 234 residues long: Demethylmenaquinone methyltransferase (234 aa).

S-adenosyl-L-methionine contacts are provided by residues Thr-58, Asp-79, and 104–105 (NA).

Belongs to the class I-like SAM-binding methyltransferase superfamily. MenG/UbiE family.

It carries out the reaction a 2-demethylmenaquinol + S-adenosyl-L-methionine = a menaquinol + S-adenosyl-L-homocysteine + H(+). It functions in the pathway quinol/quinone metabolism; menaquinone biosynthesis; menaquinol from 1,4-dihydroxy-2-naphthoate: step 2/2. In terms of biological role, methyltransferase required for the conversion of demethylmenaquinol (DMKH2) to menaquinol (MKH2). This is Demethylmenaquinone methyltransferase from Lysinibacillus sphaericus (strain C3-41).